A 961-amino-acid polypeptide reads, in one-letter code: Valine--tRNA ligase (961 aa).

Residues 48 to 58 (PNVTGSLHMGH) carry the 'HIGH' region motif. The short motif at 560–564 (KMSKS) is the 'KMSKS' region element. Lys563 serves as a coordination point for ATP. A coiled-coil region spans residues 892-961 (FINKDTELAR…QAQFKAIEAL (70 aa)).

Belongs to the class-I aminoacyl-tRNA synthetase family. ValS type 1 subfamily. In terms of assembly, monomer.

It is found in the cytoplasm. It catalyses the reaction tRNA(Val) + L-valine + ATP = L-valyl-tRNA(Val) + AMP + diphosphate. Its function is as follows. Catalyzes the attachment of valine to tRNA(Val). As ValRS can inadvertently accommodate and process structurally similar amino acids such as threonine, to avoid such errors, it has a 'posttransfer' editing activity that hydrolyzes mischarged Thr-tRNA(Val) in a tRNA-dependent manner. The protein is Valine--tRNA ligase of Haemophilus ducreyi (strain 35000HP / ATCC 700724).